Consider the following 589-residue polypeptide: Cyclohexane-1,2-dione hydrolase (589 aa).

Glutamate 52 contacts thiamine diphosphate. The thiamine pyrophosphate binding stretch occupies residues 400-480 (NHTLPMFGGA…VITMVFTNES (81 aa)). Residues aspartate 451 and asparagine 478 each contribute to the Mg(2+) site.

Belongs to the TPP enzyme family. In terms of assembly, homodimer. Mg(2+) is required as a cofactor. The cofactor is thiamine diphosphate. It depends on FAD as a cofactor.

The catalysed reaction is cyclohexan-1,2-dione + H2O = 6-oxohexanoate + H(+). In terms of biological role, catalyzes the ring-opening cleavage of the alicyclic alcohol cyclohexane-1,2-dione. This is Cyclohexane-1,2-dione hydrolase from Azoarcus sp.